We begin with the raw amino-acid sequence, 95 residues long: Large ribosomal subunit protein bL27 (95 aa).

A propeptide spanning residues 1-6 is cleaved from the precursor; the sequence is MILQLF.

The protein belongs to the bacterial ribosomal protein bL27 family. In terms of processing, the N-terminus is cleaved by ribosomal processing cysteine protease Prp.

The sequence is that of Large ribosomal subunit protein bL27 from Caldanaerobacter subterraneus subsp. tengcongensis (strain DSM 15242 / JCM 11007 / NBRC 100824 / MB4) (Thermoanaerobacter tengcongensis).